The primary structure comprises 137 residues: uncharacterized protein (137 aa).

Residues 31–83 form a disordered region; it reads PASPINDKEKDKAGGRLPSGSEPRARAFCEAGADGEQGDPSPADTIKANQGHI.

This is an uncharacterized protein from Homo sapiens (Human).